We begin with the raw amino-acid sequence, 365 residues long: Peptide chain release factor 2 (365 aa).

Glutamine 252 carries the post-translational modification N5-methylglutamine.

It belongs to the prokaryotic/mitochondrial release factor family. In terms of processing, methylated by PrmC. Methylation increases the termination efficiency of RF2.

The protein resides in the cytoplasm. Functionally, peptide chain release factor 2 directs the termination of translation in response to the peptide chain termination codons UGA and UAA. The polypeptide is Peptide chain release factor 2 (Pasteurella multocida (strain Pm70)).